The chain runs to 638 residues: Ubiquitin-associated and SH3 domain-containing protein B (638 aa).

At Ser9 the chain carries Phosphoserine. Residue Thr12 is modified to Phosphothreonine. One can recognise a UBA domain in the interval Thr23–His65. Positions Ala243–Glu308 constitute an SH3 domain. Residues Gly369–Glu638 form a protein tyrosine phosphatase region. The active site involves Arg379. The active-site Tele-phosphohistidine intermediate is the His380. Residue His565 is part of the active site.

In terms of assembly, homodimer. Interacts with JAK2 (in vitro). Interacts with CBL. Part of a complex containing CBL and activated EGFR. Interacts with ubiquitin and with mono-ubiquitinated proteins. Interacts with ZAP70 (ubiquitinated form). Detected in splenic T-cells and B-cells, total spleen, skeletal muscle, heart, lung, kidney, thymus, brain and liver (at protein level). Highly expressed in brain. Detected in heart, spleen, lung, liver, kidney and testis.

Its subcellular location is the cytoplasm. It localises to the nucleus. It catalyses the reaction O-phospho-L-tyrosyl-[protein] + H2O = L-tyrosyl-[protein] + phosphate. Interferes with CBL-mediated down-regulation and degradation of receptor-type tyrosine kinases. Promotes accumulation of activated target receptors, such as T-cell receptors and EGFR, on the cell surface. Exhibits tyrosine phosphatase activity toward several substrates including EGFR, FAK, SYK, and ZAP70. Down-regulates proteins that are dually modified by both protein tyrosine phosphorylation and ubiquitination. The chain is Ubiquitin-associated and SH3 domain-containing protein B (Ubash3b) from Mus musculus (Mouse).